Consider the following 1073-residue polypeptide: Carbamoyl phosphate synthase large chain (1073 aa).

The carboxyphosphate synthetic domain stretch occupies residues 2 to 403; it reads PKRTDIKSIL…SLQKALRGLE (402 aa). ATP is bound by residues arginine 129, arginine 169, glycine 175, glycine 176, glutamate 208, leucine 210, glutamate 215, glycine 241, isoleucine 242, histidine 243, glutamine 285, and glutamate 299. The ATP-grasp 1 domain maps to 133–328; the sequence is DVAMKKIGLE…IAKVAAKLAV (196 aa). Mg(2+) is bound by residues glutamine 285, glutamate 299, and asparagine 301. Mn(2+) is bound by residues glutamine 285, glutamate 299, and asparagine 301. The oligomerization domain stretch occupies residues 404 to 553; that stretch reads VGATGFDPKV…YSTYEEECEA (150 aa). Positions 554 to 936 are carbamoyl phosphate synthetic domain; the sequence is NPSTDREKIM…AFAKAQLGSN (383 aa). One can recognise an ATP-grasp 2 domain in the interval 679–870; the sequence is QHAVERLKLK…LAKVAARVMA (192 aa). Residues arginine 715, histidine 754, leucine 756, glutamate 761, glycine 786, valine 787, histidine 788, serine 789, glutamine 829, and glutamate 841 each contribute to the ATP site. Positions 829, 841, and 843 each coordinate Mg(2+). Residues glutamine 829, glutamate 841, and asparagine 843 each coordinate Mn(2+). Residues 937-1073 enclose the MGS-like domain; that stretch reads STMKKHGRAL…SVQEMHAQIK (137 aa). The interval 937–1073 is allosteric domain; it reads STMKKHGRAL…SVQEMHAQIK (137 aa).

This sequence belongs to the CarB family. In terms of assembly, composed of two chains; the small (or glutamine) chain promotes the hydrolysis of glutamine to ammonia, which is used by the large (or ammonia) chain to synthesize carbamoyl phosphate. Tetramer of heterodimers (alpha,beta)4. Mg(2+) is required as a cofactor. Requires Mn(2+) as cofactor.

It catalyses the reaction hydrogencarbonate + L-glutamine + 2 ATP + H2O = carbamoyl phosphate + L-glutamate + 2 ADP + phosphate + 2 H(+). The catalysed reaction is hydrogencarbonate + NH4(+) + 2 ATP = carbamoyl phosphate + 2 ADP + phosphate + 2 H(+). It participates in amino-acid biosynthesis; L-arginine biosynthesis; carbamoyl phosphate from bicarbonate: step 1/1. Its pathway is pyrimidine metabolism; UMP biosynthesis via de novo pathway; (S)-dihydroorotate from bicarbonate: step 1/3. In terms of biological role, large subunit of the glutamine-dependent carbamoyl phosphate synthetase (CPSase). CPSase catalyzes the formation of carbamoyl phosphate from the ammonia moiety of glutamine, carbonate, and phosphate donated by ATP, constituting the first step of 2 biosynthetic pathways, one leading to arginine and/or urea and the other to pyrimidine nucleotides. The large subunit (synthetase) binds the substrates ammonia (free or transferred from glutamine from the small subunit), hydrogencarbonate and ATP and carries out an ATP-coupled ligase reaction, activating hydrogencarbonate by forming carboxy phosphate which reacts with ammonia to form carbamoyl phosphate. The polypeptide is Carbamoyl phosphate synthase large chain (Escherichia coli (strain K12)).